Here is a 198-residue protein sequence, read N- to C-terminus: Putative glutathione S-transferase alpha-2 (198 aa).

Position 2 is an N-acetylserine (serine 2). Residues 5–81 (SVPSLTYFQG…YIAKKHNFMG (77 aa)) form the GST N-terminal domain. Residues tyrosine 11, arginine 45, 52-53 (QL), and 65-66 (QS) each bind glutathione. The GST C-terminal domain maps to 83-198 (NLEEEFLVDQ…YIKERPETKF (116 aa)).

Belongs to the GST superfamily. Alpha family.

The catalysed reaction is RX + glutathione = an S-substituted glutathione + a halide anion + H(+). Functionally, conjugation of reduced glutathione to a wide number of exogenous and endogenous hydrophobic electrophiles. In Dictyostelium discoideum (Social amoeba), this protein is Putative glutathione S-transferase alpha-2 (gsta2-1).